Reading from the N-terminus, the 177-residue chain is PLAC8-like protein 1 (177 aa).

The protein belongs to the cornifelin family.

The polypeptide is PLAC8-like protein 1 (PLAC8L1) (Homo sapiens (Human)).